A 476-amino-acid polypeptide reads, in one-letter code: ATP synthase subunit beta (476 aa).

154-161 provides a ligand contact to ATP; that stretch reads GGAGVGKT.

Belongs to the ATPase alpha/beta chains family. As to quaternary structure, F-type ATPases have 2 components, CF(1) - the catalytic core - and CF(0) - the membrane proton channel. CF(1) has five subunits: alpha(3), beta(3), gamma(1), delta(1), epsilon(1). CF(0) has four main subunits: a(1), b(1), b'(1) and c(9-12).

The protein resides in the cell inner membrane. It catalyses the reaction ATP + H2O + 4 H(+)(in) = ADP + phosphate + 5 H(+)(out). Produces ATP from ADP in the presence of a proton gradient across the membrane. The catalytic sites are hosted primarily by the beta subunits. This is ATP synthase subunit beta from Rhodopseudomonas palustris (strain ATCC BAA-98 / CGA009).